A 227-amino-acid chain; its full sequence is Transcription antitermination protein NusB (227 aa).

Disordered regions lie at residues 165–189 (ASES…SDED) and 201–227 (AEET…ADES). Composition is skewed to acidic residues over residues 178–189 (DDSDALDDSDED) and 201–214 (AEET…AEDS). Basic and acidic residues predominate over residues 215 to 227 (EVSKVSEEKADES).

This sequence belongs to the NusB family.

Functionally, involved in transcription antitermination. Required for transcription of ribosomal RNA (rRNA) genes. Binds specifically to the boxA antiterminator sequence of the ribosomal RNA (rrn) operons. The protein is Transcription antitermination protein NusB of Corynebacterium glutamicum (strain ATCC 13032 / DSM 20300 / JCM 1318 / BCRC 11384 / CCUG 27702 / LMG 3730 / NBRC 12168 / NCIMB 10025 / NRRL B-2784 / 534).